An 86-amino-acid chain; its full sequence is Large ribosomal subunit protein bL27 (86 aa).

Belongs to the bacterial ribosomal protein bL27 family.

The sequence is that of Large ribosomal subunit protein bL27 from Christiangramia forsetii (strain DSM 17595 / CGMCC 1.15422 / KT0803) (Gramella forsetii).